We begin with the raw amino-acid sequence, 431 residues long: Enolase (431 aa).

Glutamine 166 contributes to the (2R)-2-phosphoglycerate binding site. The Proton donor role is filled by glutamate 208. Aspartate 245, glutamate 288, and aspartate 315 together coordinate Mg(2+). The (2R)-2-phosphoglycerate site is built by lysine 340, arginine 369, serine 370, and lysine 391. The active-site Proton acceptor is lysine 340.

The protein belongs to the enolase family. Mg(2+) is required as a cofactor.

The protein resides in the cytoplasm. Its subcellular location is the secreted. It is found in the cell surface. It carries out the reaction (2R)-2-phosphoglycerate = phosphoenolpyruvate + H2O. It participates in carbohydrate degradation; glycolysis; pyruvate from D-glyceraldehyde 3-phosphate: step 4/5. Catalyzes the reversible conversion of 2-phosphoglycerate (2-PG) into phosphoenolpyruvate (PEP). It is essential for the degradation of carbohydrates via glycolysis. This Clostridium botulinum (strain 657 / Type Ba4) protein is Enolase.